The chain runs to 468 residues: Probable citrate synthase, mitochondrial (468 aa).

Catalysis depends on residues His-303, His-349, and Asp-404.

The protein belongs to the citrate synthase family. In terms of assembly, homodimer.

Its subcellular location is the mitochondrion matrix. The enzyme catalyses oxaloacetate + acetyl-CoA + H2O = citrate + CoA + H(+). It functions in the pathway carbohydrate metabolism; tricarboxylic acid cycle; isocitrate from oxaloacetate: step 1/2. The polypeptide is Probable citrate synthase, mitochondrial (cts-1) (Caenorhabditis briggsae).